Reading from the N-terminus, the 266-residue chain is Prolactin-7A1 (266 aa).

A signal peptide spans 1–30; the sequence is MPLSFTQPCSSGALLLLVVSNLLLWENVAC. N-linked (GlcNAc...) asparagine glycosylation is found at N36, N58, N110, N149, and N157. 2 cysteine pairs are disulfide-bonded: C114-C231 and C248-C257.

This sequence belongs to the somatotropin/prolactin family. In terms of tissue distribution, expressed specifically in the placenta. Detected only in the trophoblast giant cells.

The protein resides in the secreted. The protein is Prolactin-7A1 (Prl7a1) of Mus musculus (Mouse).